Here is a 180-residue protein sequence, read N- to C-terminus: UPF0227 protein Shew_1627 (180 aa).

This sequence belongs to the UPF0227 family.

This Shewanella loihica (strain ATCC BAA-1088 / PV-4) protein is UPF0227 protein Shew_1627.